A 421-amino-acid chain; its full sequence is Extracellular signal-regulated kinase 1 (421 aa).

The 306-residue stretch at 70-375 folds into the Protein kinase domain; sequence YQILEIVGEG…VEDALKHPYL (306 aa). ATP contacts are provided by residues 76–84 and Lys-99; that span reads VGEGAYGIV. Asp-194 (proton acceptor) is an active-site residue. Thr-230 is modified (phosphothreonine). A TXY motif is present at residues 230–232; it reads TEY. Tyr-232 carries the phosphotyrosine modification.

Belongs to the protein kinase superfamily. CMGC Ser/Thr protein kinase family. MAP kinase subfamily. It depends on Mg(2+) as a cofactor. In terms of processing, dually phosphorylated on Thr-230 and Tyr-232, which activates the enzyme.

It catalyses the reaction L-seryl-[protein] + ATP = O-phospho-L-seryl-[protein] + ADP + H(+). It carries out the reaction L-threonyl-[protein] + ATP = O-phospho-L-threonyl-[protein] + ADP + H(+). With respect to regulation, activated by tyrosine and threonine phosphorylation. This chain is Extracellular signal-regulated kinase 1 (CEK1), found in Candida albicans (strain SC5314 / ATCC MYA-2876) (Yeast).